The following is an 873-amino-acid chain: Bifunctional uridylyltransferase/uridylyl-removing enzyme (873 aa).

Residues 1–332 (MPYQCPITFN…NGGQTQEAEI (332 aa)) form a uridylyltransferase region. The interval 333–692 (LDNDFQRRGS…ISKKATRGGT (360 aa)) is uridylyl-removing. An HD domain is found at 451 to 573 (VDEHSIRLLK…VRDEESLELL (123 aa)). 2 ACT domains span residues 693–777 (EVFV…RTPR) and 800–873 (LMEL…ELAP).

Belongs to the GlnD family. Mg(2+) serves as cofactor.

The enzyme catalyses [protein-PII]-L-tyrosine + UTP = [protein-PII]-uridylyl-L-tyrosine + diphosphate. The catalysed reaction is [protein-PII]-uridylyl-L-tyrosine + H2O = [protein-PII]-L-tyrosine + UMP + H(+). Uridylyltransferase (UTase) activity is inhibited by glutamine, while glutamine activates uridylyl-removing (UR) activity. Functionally, modifies, by uridylylation and deuridylylation, the PII regulatory proteins (GlnB and homologs), in response to the nitrogen status of the cell that GlnD senses through the glutamine level. Under low glutamine levels, catalyzes the conversion of the PII proteins and UTP to PII-UMP and PPi, while under higher glutamine levels, GlnD hydrolyzes PII-UMP to PII and UMP (deuridylylation). Thus, controls uridylylation state and activity of the PII proteins, and plays an important role in the regulation of nitrogen assimilation and metabolism. The sequence is that of Bifunctional uridylyltransferase/uridylyl-removing enzyme from Vibrio atlanticus (strain LGP32) (Vibrio splendidus (strain Mel32)).